The chain runs to 678 residues: Glycine--tRNA ligase beta subunit (678 aa).

This sequence belongs to the class-II aminoacyl-tRNA synthetase family. Tetramer of two alpha and two beta subunits.

It is found in the cytoplasm. The enzyme catalyses tRNA(Gly) + glycine + ATP = glycyl-tRNA(Gly) + AMP + diphosphate. This chain is Glycine--tRNA ligase beta subunit, found in Streptococcus pneumoniae (strain ATCC 700669 / Spain 23F-1).